Reading from the N-terminus, the 962-residue chain is pH-response regulator protein palF/prr-3 (962 aa).

Disordered regions lie at residues 1–43 (MGPF…DSST), 225–326 (APPK…THPS), 568–675 (TDSN…PDEN), and 689–962 (RLLP…RYER). Basic residues predominate over residues 237 to 246 (ISKRAKKKRP). 3 stretches are compositionally biased toward polar residues: residues 297-307 (GFSQAPRSVSH), 314-326 (SGDS…THPS), and 581-596 (PSLT…SNYV). 2 stretches are compositionally biased toward low complexity: residues 696–722 (PIAA…PDSS) and 738–747 (PTPAATPATA). Positions 793–805 (TEDKQELERRRLL) are enriched in basic and acidic residues. The segment covering 830–839 (AGPSGSRAGP) has biased composition (low complexity). Residues 840–849 (SAPPPAPPVA) are compositionally biased toward pro residues. Residues 913-928 (PSSPVLAPASAFFPAS) are compositionally biased toward low complexity. A compositionally biased stretch (polar residues) spans 929–949 (GSGNVHDSPREQGQQARSDSS).

It belongs to the arrestin family. PalF/RIM8 subfamily.

Required for the proteolytic cleavage of the transcription factor pacc-1 in response to alkaline ambient pH. In Neurospora crassa (strain ATCC 24698 / 74-OR23-1A / CBS 708.71 / DSM 1257 / FGSC 987), this protein is pH-response regulator protein palF/prr-3 (prr-3).